The sequence spans 63 residues: Actiflagelin (63 aa).

5 disulfide bridges follow: Cys3-Cys24, Cys6-Cys11, Cys17-Cys39, Cys43-Cys55, and Cys56-Cys61. A Proline amide modification is found at Pro63.

In terms of processing, contains 5 disulfide bonds. Expressed by the venom gland.

It localises to the secreted. In terms of biological role, unknown. In vitro, this toxin activates sperm motility when tested on OF1 male mice. This is Actiflagelin from Walterinnesia aegyptia (Desert black snake).